The primary structure comprises 254 residues: Alcohol dehydrogenase (254 aa).

10–33 (FVAGLGGIGLDTSREIVKSGPKNL) contacts NAD(+). Residue serine 138 coordinates substrate. Tyrosine 151 (proton acceptor) is an active-site residue.

The protein belongs to the short-chain dehydrogenases/reductases (SDR) family. In terms of assembly, homodimer.

It carries out the reaction a primary alcohol + NAD(+) = an aldehyde + NADH + H(+). The enzyme catalyses a secondary alcohol + NAD(+) = a ketone + NADH + H(+). The chain is Alcohol dehydrogenase (Adh) from Drosophila grimshawi (Hawaiian fruit fly).